The primary structure comprises 161 residues: Cap-associated protein CAF20 (161 aa).

The span at 52–72 (HFGRRRSSHHHGRPKIKHNKP) shows a compositional bias: basic residues. The tract at residues 52–108 (HFGRRRSSHHHGRPKIKHNKPKVTTDSDGWCTFEAKKKGSGEDDEEETETTPTSTVP) is disordered. 2 positions are modified to phosphoserine: Ser78 and Ser91. 3 positions are modified to phosphothreonine: Thr99, Thr101, and Thr102. Ser154 is modified (phosphoserine).

Belongs to the CAF20 family. Interacts with TIF45. In terms of processing, phosphorylated by casein kinase II complex (CK2).

The protein resides in the cytoplasm. In terms of biological role, acts as an inhibitor of cap-dependent translation. Competes with eIF4G1/TIF4631 and EAP1 for binding to eIF4E/TIF45 and interferes with the formation of the eIF4F complex, inhibiting translation and stabilizing mRNA. Binding affinity for eIF4E/TIF45 is 10-fold less than that of eIF4G1/TIF4631. Required for induction of pseudohyphal growth in response to nitrogen limitation, probably by regulating STE12 translation. This is Cap-associated protein CAF20 (CAF20) from Saccharomyces cerevisiae (strain ATCC 204508 / S288c) (Baker's yeast).